Here is a 318-residue protein sequence, read N- to C-terminus: MDIDRNRLRTGLPQVGVQPYRQVHAHSTGNRNSTVQNEADYHWRKDPELGFFSHVVGNFRIMQVGPVNNGSWDVGGGWNAETYAAVELIESHSTKEEFMADYRLYIELLRNLADEAGLPKTLDTDDLAGIKTHEYCTNNQPNNHSDHVDPYPYLASWGISREQFKQDIENGLSAATGWQKNGTGYWYVHSDGSYSKDKFEKINGTWYYFDGSGYMLSDRWKKHTDGNWYYFDQSGEMATGWKKIADKWYYFDVEGAMKTGWVKYKDTWYYLDAKEGAMVSNAFIQSADGTGWYYLKPDGTLADKPEFTVEPDGLITVK.

The N-acetylmuramoyl-L-alanine amidase domain occupies 19 to 151 (PYRQVHAHST…NNHSDHVDPY (133 aa)). Cell wall-binding repeat units follow at residues 175 to 194 (ATGW…DGSY), 196 to 215 (KDKF…SGYM), 217 to 237 (SDRW…SGEM), 238 to 257 (ATGW…EGAM), 258 to 277 (KTGW…KEGA), and 280 to 301 (SNAF…DGTL).

The protein belongs to the N-acetylmuramoyl-L-alanine amidase 2 family.

It is found in the secreted. It catalyses the reaction Hydrolyzes the link between N-acetylmuramoyl residues and L-amino acid residues in certain cell-wall glycopeptides.. In Streptococcus pneumoniae phage HB-3, this protein is Lytic amidase (HBL).